We begin with the raw amino-acid sequence, 494 residues long: Glycogen synthase (494 aa).

Lysine 15 contacts ADP-alpha-D-glucose.

Belongs to the glycosyltransferase 1 family. Bacterial/plant glycogen synthase subfamily.

The catalysed reaction is [(1-&gt;4)-alpha-D-glucosyl](n) + ADP-alpha-D-glucose = [(1-&gt;4)-alpha-D-glucosyl](n+1) + ADP + H(+). It participates in glycan biosynthesis; glycogen biosynthesis. In terms of biological role, synthesizes alpha-1,4-glucan chains using ADP-glucose. In Albidiferax ferrireducens (strain ATCC BAA-621 / DSM 15236 / T118) (Rhodoferax ferrireducens), this protein is Glycogen synthase.